The sequence spans 154 residues: 6,7-dimethyl-8-ribityllumazine synthase (154 aa).

Residues Trp22, 56–58 (SHE), and 80–82 (AVI) contribute to the 5-amino-6-(D-ribitylamino)uracil site. Position 85-86 (85-86 (DT)) interacts with (2S)-2-hydroxy-3-oxobutyl phosphate. His88 acts as the Proton donor in catalysis. Phe113 serves as a coordination point for 5-amino-6-(D-ribitylamino)uracil. Arg127 provides a ligand contact to (2S)-2-hydroxy-3-oxobutyl phosphate.

Belongs to the DMRL synthase family.

It carries out the reaction (2S)-2-hydroxy-3-oxobutyl phosphate + 5-amino-6-(D-ribitylamino)uracil = 6,7-dimethyl-8-(1-D-ribityl)lumazine + phosphate + 2 H2O + H(+). Its pathway is cofactor biosynthesis; riboflavin biosynthesis; riboflavin from 2-hydroxy-3-oxobutyl phosphate and 5-amino-6-(D-ribitylamino)uracil: step 1/2. In terms of biological role, catalyzes the formation of 6,7-dimethyl-8-ribityllumazine by condensation of 5-amino-6-(D-ribitylamino)uracil with 3,4-dihydroxy-2-butanone 4-phosphate. This is the penultimate step in the biosynthesis of riboflavin. In Deinococcus geothermalis (strain DSM 11300 / CIP 105573 / AG-3a), this protein is 6,7-dimethyl-8-ribityllumazine synthase.